A 182-amino-acid polypeptide reads, in one-letter code: MSGFVPSEIFFTRGVGRGETQLESFEAALRDAGIAQFNLSSISSIFPPHAKMVSKEEGLKKLSPGQILFTVLARNTSNELNRMISAAIGYAIPRDKSKWGYLSEHHSFGETEKVAGSFAEKLAAEMLSSTFGSTSQLIYDKEKEEYVLEDKILTTGNISATAVVLSHDEWTTVVAAAVLIVE.

Position 44 is a pyruvic acid (Ser) (Ser44).

Belongs to the PdaD family. Pyruvate is required as a cofactor.

The catalysed reaction is L-arginine + H(+) = agmatine + CO2. In Thermoplasma volcanium (strain ATCC 51530 / DSM 4299 / JCM 9571 / NBRC 15438 / GSS1), this protein is Pyruvoyl-dependent arginine decarboxylase.